The sequence spans 559 residues: Oxygen-dependent choline dehydrogenase (559 aa).

4-33 (DYIIIGAGSAGNVLATRLTEDSDVTVLLLE) contacts FAD. His473 functions as the Proton acceptor in the catalytic mechanism.

The protein belongs to the GMC oxidoreductase family. It depends on FAD as a cofactor.

The catalysed reaction is choline + A = betaine aldehyde + AH2. It catalyses the reaction betaine aldehyde + NAD(+) + H2O = glycine betaine + NADH + 2 H(+). It participates in amine and polyamine biosynthesis; betaine biosynthesis via choline pathway; betaine aldehyde from choline (cytochrome c reductase route): step 1/1. In terms of biological role, involved in the biosynthesis of the osmoprotectant glycine betaine. Catalyzes the oxidation of choline to betaine aldehyde and betaine aldehyde to glycine betaine at the same rate. The sequence is that of Oxygen-dependent choline dehydrogenase from Cronobacter sakazakii (strain ATCC BAA-894) (Enterobacter sakazakii).